The primary structure comprises 168 residues: MKTVRVPIALVQSVMRTLREKLQQANKYLNTDYPEPTLQYNQRGTIAGSAYYANWEIRLNPTLLIENKQNFIEEVIPHELAHLLVSRHFGRVAPHGKEWKWMMETVLQVSAKRTHHFDISNVTAKTFSYACRCQEIHQLTLRRHNKVQRGETQYRCRHCQAILQLIKE.

A SprT-like domain is found at 20-166; the sequence is EKLQQANKYL…RHCQAILQLI (147 aa). Zn(2+) is bound at residue His-78. Glu-79 is an active-site residue. Position 82 (His-82) interacts with Zn(2+).

It belongs to the SprT family. It depends on Zn(2+) as a cofactor.

The protein localises to the cytoplasm. The protein is Protein SprT of Proteus mirabilis (strain HI4320).